The chain runs to 1028 residues: Antigenic heat-stable 120 kDa protein (1028 aa).

2 stretches are compositionally biased toward polar residues: residues 359–384 and 391–400; these read GQSKEQPLITPQQTTSSSVEPPQYKQ and PTNQPLQPET. The disordered stretch occupies residues 359–405; the sequence is GQSKEQPLITPQQTTSSSVEPPQYKQQVPPITPTNQPLQPETSQMQQ.

It localises to the cytoplasm. The protein is Antigenic heat-stable 120 kDa protein (sca4) of Rickettsia africae.